The primary structure comprises 85 residues: Small ribosomal subunit protein bS16 (85 aa).

Belongs to the bacterial ribosomal protein bS16 family.

The chain is Small ribosomal subunit protein bS16 from Buchnera aphidicola subsp. Schizaphis graminum (strain Sg).